A 638-amino-acid chain; its full sequence is Meiosis initiator protein (638 aa).

Disordered stretches follow at residues Met1–Pro21, Asn60–Thr79, Leu138–Gln249, Pro404–Arg433, and Gly447–Pro537. The span at Tyr7–Gly20 shows a compositional bias: polar residues. Residues Arg62 to Arg75 are basic motif; degenerate. The bHLH domain maps to Arg62–Leu116. The helix-loop-helix motif stretch occupies residues Lys76–Leu116. Residues Thr157–Ser167 are compositionally biased toward low complexity. The span at Thr182–Thr191 shows a compositional bias: polar residues. Positions Pro412–Ser430 are enriched in basic and acidic residues. Residues Ser453–Ser465 show a composition bias toward low complexity. Over residues Lys528 to Pro537 the composition is skewed to basic residues. Positions Lys540 to Gly608 form a DNA-binding region, HMG box.

Interacts with STRA8.

The protein localises to the nucleus. Its function is as follows. Gatekeeper of meiotic initiation in both male and female germ cells. In complex with STRA8, directly activates the transcription of a subset of critical meiotic genes playing a central role in cell-cycle switching from mitosis to meiosis. Temporal expression of MEIOSIN is required for meiotic entry decision. This is Meiosis initiator protein from Homo sapiens (Human).